Here is a 273-residue protein sequence, read N- to C-terminus: Dermonecrotic toxin SdSicTox-betaIIB1bxi (273 aa).

His4 is an active-site residue. 2 residues coordinate Mg(2+): Glu24 and Asp26. His40 serves as the catalytic Nucleophile. 2 cysteine pairs are disulfide-bonded: Cys44–Cys50 and Cys46–Cys189. Asp84 lines the Mg(2+) pocket.

The protein belongs to the arthropod phospholipase D family. Class II subfamily. It depends on Mg(2+) as a cofactor. Expressed by the venom gland.

It is found in the secreted. It carries out the reaction an N-(acyl)-sphingosylphosphocholine = an N-(acyl)-sphingosyl-1,3-cyclic phosphate + choline. It catalyses the reaction an N-(acyl)-sphingosylphosphoethanolamine = an N-(acyl)-sphingosyl-1,3-cyclic phosphate + ethanolamine. The catalysed reaction is a 1-acyl-sn-glycero-3-phosphocholine = a 1-acyl-sn-glycero-2,3-cyclic phosphate + choline. The enzyme catalyses a 1-acyl-sn-glycero-3-phosphoethanolamine = a 1-acyl-sn-glycero-2,3-cyclic phosphate + ethanolamine. Dermonecrotic toxins cleave the phosphodiester linkage between the phosphate and headgroup of certain phospholipids (sphingolipid and lysolipid substrates), forming an alcohol (often choline) and a cyclic phosphate. This toxin acts on sphingomyelin (SM). It may also act on ceramide phosphoethanolamine (CPE), lysophosphatidylcholine (LPC) and lysophosphatidylethanolamine (LPE), but not on lysophosphatidylserine (LPS), and lysophosphatidylglycerol (LPG). It acts by transphosphatidylation, releasing exclusively cyclic phosphate products as second products. Induces dermonecrosis, hemolysis, increased vascular permeability, edema, inflammatory response, and platelet aggregation. In Sicarius cf. damarensis (strain GJB-2008) (Six-eyed sand spider), this protein is Dermonecrotic toxin SdSicTox-betaIIB1bxi.